The following is a 405-amino-acid chain: Pleckstrin homology-like domain family A member 1 (405 aa).

2 stretches are compositionally biased toward basic and acidic residues: residues 1–11 and 54–63; these read MRRTPAAERLS and RSPEDGREQP. Disordered stretches follow at residues 1–67, 189–217, and 293–405; these read MRRT…AHGS, QLQQ…VASL, and QQHL…SNSA. The PH domain maps to 153–277; sequence ALKEGVLEKR…AEITLQMVQY (125 aa). Low complexity predominate over residues 189–202; sequence QLQQQQQQQQPGQG. The span at 204-213 shows a compositional bias: polar residues; the sequence is AEPSQPSGPT. Residues 294–309 show a composition bias toward low complexity; sequence QHLVQQQPPQTQQIQP. The segment at 309-344 is 16 X 2 AA repeats of P-Q; it reads PQPQPQIQPQPQPQIQPQPQPQPQPQPQPQPQPQPQ. Positions 310–342 are enriched in pro residues; sequence QPQPQIQPQPQPQIQPQPQPQPQPQPQPQPQPQ. Positions 350–376 are enriched in basic residues; the sequence is PHPHPHPYSHPHQHPHPHPHPHPHPHP. Positions 354-377 are 11 X 2 AA repeats of P-H; the sequence is PHPYSHPHQHPHPHPHPHPHPHPH. A compositionally biased stretch (low complexity) spans 378 to 389; that stretch reads PYQLQHAHQPLH.

In terms of assembly, interacts with RPL14, EIF3S7 and PABPC4. As to expression, widely expressed with very high levels in adult liver and high levels in adult lung. According to PubMed:10428057 expressed at low levels in liver. Expressed at increased levels in atherosclerotic lesions observed in hyperhomocysteinema.

It is found in the cytoplasm. It localises to the cytoplasmic vesicle. The protein resides in the nucleus. The protein localises to the nucleolus. Its function is as follows. Seems to be involved in regulation of apoptosis. May be involved in detachment-mediated programmed cell death. May mediate apoptosis during neuronal development. May be involved in regulation of anti-apoptotic effects of IGF1. Required for TCR-induced apoptosis and expression of TNFRSF6/FAS in a T-cell hybridoma cell line. May be involved in translational regulation. The polypeptide is Pleckstrin homology-like domain family A member 1 (Phlda1) (Mus musculus (Mouse)).